A 174-amino-acid polypeptide reads, in one-letter code: Amino-acid acetyltransferase (174 aa).

Positions Pro10 to Asp148 constitute an N-acetyltransferase domain.

This sequence belongs to the acetyltransferase family. In terms of assembly, homodimer and homotetramer.

It catalyses the reaction L-glutamate + acetyl-CoA = N-acetyl-L-glutamate + CoA + H(+). It participates in amino-acid biosynthesis; L-arginine biosynthesis; N(2)-acetyl-L-ornithine from L-glutamate: step 1/4. Its activity is regulated as follows. Inhibited by L-arginine. Functionally, catalyzes the conversion of L-glutamate to alpha-N-acetyl-L-glutamate. L-glutamine is a significantly better substrate compared to L-glutamate. The protein is Amino-acid acetyltransferase (argA) of Mycobacterium tuberculosis (strain ATCC 25618 / H37Rv).